A 1125-amino-acid polypeptide reads, in one-letter code: Telomerase reverse transcriptase (1125 aa).

The segment at 1 to 234 (MPRAPRCRAV…ARRRRSSARG (234 aa)) is RNA-interacting domain 1. Residues 58-199 (VPWDAQPPPA…RQVGGTRAGF (142 aa)) are GQ motif. Positions 137–141 (WGLLL) are required for regulating specificity for telomeric DNA and for processivity for primer elongation. The interval 186-308 (RRPTRQVGGT…WRLSPSEGEP (123 aa)) is disordered. Positions 224–243 (GARRRRSSARGRLPPAKRPR) are enriched in basic residues. Residues 226–244 (RRRRSSARGRLPPAKRPRR) carry the Bipartite nuclear localization signal motif. Ser231 is modified (phosphoserine; by PKB/AKT1). The interval 235 to 312 (RLPPAKRPRR…PSEGEPGAGA (78 aa)) is linker. 2 stretches are compositionally biased toward basic and acidic residues: residues 244-253 (RGLEPGRDLE) and 269-279 (DAAEAKSRKGD). Residues 290-531 (GERGVGSASW…VPAAEHRQRE (242 aa)) are required for oligomerization. An RNA-interacting domain 2 region spans residues 313–543 (CAETKRFLYC…LGRFLHWLMG (231 aa)). The TFLY; involved in RNA binding motif lies at 316 to 321 (TKRFLY). The interval 364–514 (PRRPRRLPAR…MKVQDCAWLR (151 aa)) is QFP motif. The tract at residues 385-405 (LGNHARSPYGALLRAHCPLPA) is CP motif. Phosphoserine; by DYRK2 is present on Ser450. The 331-residue stretch at 598-928 (EVRQHQEARP…CLFPWCGLLL (331 aa)) folds into the Reverse transcriptase domain. The residue at position 700 (Tyr700) is a Phosphotyrosine; by SRC-type Tyr-kinases. Mg(2+) is bound by residues Asp705, Asp861, and Asp862. The required for oligomerization stretch occupies residues 907–921 (LGGAAPLQLPAHCLF). Residues 923-927 (WCGLL) form a primer grip sequence region. The interval 929–1125 (DTRTLEVHGD…LTADFKTILD (197 aa)) is CTE.

Belongs to the reverse transcriptase family. Telomerase subfamily. As to quaternary structure, catalytic component of the telomerase holoenzyme complex composed of one molecule of TERT, one molecule of WRAP53/TCAB1, two molecules of H/ACA ribonucleoprotein complex subunits DKC1, NOP10, NHP2 and GAR1, and a telomerase RNA template component (TERC). The telomerase holoenzyme complex is associated with TEP1, SMG6/EST1A and POT1. The molecular chaperone HSP90/P23 complex is required for correct assembly and stabilization of the active telomerase. Interacts directly with HSP90A and PTGES3. Interacts with HSPA1A; the interaction occurs in the absence of TERC and dissociates once the complex has formed. Interacts with RAN; the interaction promotes nuclear export of TERT. Interacts with XPO1. Interacts with PTPN11; the interaction retains TERT in the nucleus. Interacts with NCL (via RRM1 and C-terminal RRM4/Arg/Gly-rich domains); the interaction is important for nucleolar localization of TERT. Interacts with SMARCA4 (via the bromodomain); the interaction regulates Wnt-mediated signaling. Interacts with MCRS1 (isoform MCRS2); the interaction inhibits in vitro telomerase activity. Interacts with PIF1; the interaction has no effect on the elongation activity of TERT. Interacts with PML; the interaction recruits TERT to PML bodies and inhibits telomerase activity. Interacts with GNL3L. Interacts with isoform 1 and isoform 2 of NVL. Interacts with DHX36. Interacts with ATF7. Phosphorylation at Tyr-700 under oxidative stress leads to translocation of TERT to the cytoplasm and reduces its antiapoptotic activity. Dephosphorylated by SHP2/PTPN11 leading to nuclear retention. Phosphorylation at Ser-231 by the AKT pathway promotes nuclear location. Phosphorylation at the G2/M phase at Ser-450 by DYRK2 promotes ubiquitination by the EDVP complex and degradation. In terms of processing, ubiquitinated by the EDVP complex, a E3 ligase complex following phosphorylation at Ser-450 by DYRK2. Ubiquitinated leads to proteasomal degradation.

It localises to the nucleus. The protein localises to the nucleolus. It is found in the nucleoplasm. Its subcellular location is the chromosome. The protein resides in the telomere. It localises to the cytoplasm. The protein localises to the PML body. It carries out the reaction DNA(n) + a 2'-deoxyribonucleoside 5'-triphosphate = DNA(n+1) + diphosphate. In terms of biological role, telomerase is a ribonucleoprotein enzyme essential for the replication of chromosome termini in most eukaryotes. Active in progenitor and cancer cells. Inactive, or very low activity, in normal somatic cells. Catalytic component of the teleromerase holoenzyme complex whose main activity is the elongation of telomeres by acting as a reverse transcriptase that adds simple sequence repeats to chromosome ends by copying a template sequence within the RNA component of the enzyme. Catalyzes the RNA-dependent extension of 3'-chromosomal termini with the 6-nucleotide telomeric repeat unit, 5'-TTAGGG-3'. The catalytic cycle involves primer binding, primer extension and release of product once the template boundary has been reached or nascent product translocation followed by further extension. More active on substrates containing 2 or 3 telomeric repeats. Telomerase activity is regulated by a number of factors including telomerase complex-associated proteins, chaperones and polypeptide modifiers. Modulates Wnt signaling. Plays important roles in aging and antiapoptosis. The sequence is that of Telomerase reverse transcriptase (TERT) from Bos taurus (Bovine).